Reading from the N-terminus, the 254-residue chain is Phosphonates import ATP-binding protein PhnC 2 (254 aa).

Residues 4–248 form the ABC transporter domain; that stretch reads LEVNNLGKHY…KIESIYGFQQ (245 aa). 37 to 44 is a binding site for ATP; sequence GPSGAGKS.

It belongs to the ABC transporter superfamily. Phosphonates importer (TC 3.A.1.9.1) family. In terms of assembly, the complex is composed of two ATP-binding proteins (PhnC), two transmembrane proteins (PhnE) and a solute-binding protein (PhnD).

The protein localises to the cell membrane. The catalysed reaction is phosphonate(out) + ATP + H2O = phosphonate(in) + ADP + phosphate + H(+). Functionally, part of the ABC transporter complex PhnCDE involved in phosphonates import. Responsible for energy coupling to the transport system. This is Phosphonates import ATP-binding protein PhnC 2 from Oceanobacillus iheyensis (strain DSM 14371 / CIP 107618 / JCM 11309 / KCTC 3954 / HTE831).